The sequence spans 937 residues: Chaperone protein ClpD2, chloroplastic (937 aa).

The N-terminal 80 residues, methionine 1–lysine 80, are a transit peptide targeting the chloroplast. Repeat regions lie at residues alanine 81–glutamate 137 and phenylalanine 152–glutamate 217. Positions alanine 81–glutamate 217 constitute a Clp R domain. Residues leucine 259 to glutamate 513 are i. ATP is bound by residues glycine 304 to threonine 311 and glycine 658 to threonine 665. The segment at valine 584–serine 775 is II.

Belongs to the ClpA/ClpB family. ClpD subfamily. In terms of tissue distribution, highly expressed in stems, culms and leaves.

The protein resides in the plastid. It is found in the chloroplast. Functionally, molecular chaperone that may interact with a ClpP-like protease involved in degradation of denatured proteins in the chloroplast. The polypeptide is Chaperone protein ClpD2, chloroplastic (CLPD2) (Oryza sativa subsp. japonica (Rice)).